The chain runs to 188 residues: VQ motif-containing protein 18 (188 aa).

Disordered stretches follow at residues 1–20 (MEIT…VSMN), 58–92 (LTGK…HQPV), and 157–188 (GFIF…HNSS). The short motif at 51–60 (FRSLVQSLTG) is the VQ element. Over residues 161–179 (NNNNNNNNNNNNNNNNNTN) the composition is skewed to low complexity.

It is found in the nucleus. Functionally, may function as positive regulator of plant growth. The sequence is that of VQ motif-containing protein 18 from Arabidopsis thaliana (Mouse-ear cress).